Here is a 137-residue protein sequence, read N- to C-terminus: Small ribosomal subunit protein uS12 (137 aa).

The tract at residues 1–55 (MPTINQLVRKPRQSKIKKSDSPALNKGFNSKKKKFTDLNSPQKRGVCTRVGTMTP) is disordered. A 3-methylthioaspartic acid modification is found at Asp102. The segment at 118 to 137 (SGVDGRRQGRSLYGTKKPKN) is disordered.

Belongs to the universal ribosomal protein uS12 family. Part of the 30S ribosomal subunit. Contacts proteins S8 and S17. May interact with IF1 in the 30S initiation complex.

In terms of biological role, with S4 and S5 plays an important role in translational accuracy. Its function is as follows. Interacts with and stabilizes bases of the 16S rRNA that are involved in tRNA selection in the A site and with the mRNA backbone. Located at the interface of the 30S and 50S subunits, it traverses the body of the 30S subunit contacting proteins on the other side and probably holding the rRNA structure together. The combined cluster of proteins S8, S12 and S17 appears to hold together the shoulder and platform of the 30S subunit. This is Small ribosomal subunit protein uS12 from Staphylococcus aureus (strain Mu3 / ATCC 700698).